Consider the following 223-residue polypeptide: Phosphoribosylformylglycinamidine synthase subunit PurQ (223 aa).

Positions S3 to A223 constitute a Glutamine amidotransferase type-1 domain. The Nucleophile role is filled by C87. Residues H197 and E199 contribute to the active site.

In terms of assembly, part of the FGAM synthase complex composed of 1 PurL, 1 PurQ and 2 PurS subunits.

It localises to the cytoplasm. It carries out the reaction N(2)-formyl-N(1)-(5-phospho-beta-D-ribosyl)glycinamide + L-glutamine + ATP + H2O = 2-formamido-N(1)-(5-O-phospho-beta-D-ribosyl)acetamidine + L-glutamate + ADP + phosphate + H(+). The enzyme catalyses L-glutamine + H2O = L-glutamate + NH4(+). The protein operates within purine metabolism; IMP biosynthesis via de novo pathway; 5-amino-1-(5-phospho-D-ribosyl)imidazole from N(2)-formyl-N(1)-(5-phospho-D-ribosyl)glycinamide: step 1/2. Its function is as follows. Part of the phosphoribosylformylglycinamidine synthase complex involved in the purines biosynthetic pathway. Catalyzes the ATP-dependent conversion of formylglycinamide ribonucleotide (FGAR) and glutamine to yield formylglycinamidine ribonucleotide (FGAM) and glutamate. The FGAM synthase complex is composed of three subunits. PurQ produces an ammonia molecule by converting glutamine to glutamate. PurL transfers the ammonia molecule to FGAR to form FGAM in an ATP-dependent manner. PurS interacts with PurQ and PurL and is thought to assist in the transfer of the ammonia molecule from PurQ to PurL. The polypeptide is Phosphoribosylformylglycinamidine synthase subunit PurQ (Brucella suis biovar 1 (strain 1330)).